Consider the following 150-residue polypeptide: Protein-export protein SecB (150 aa).

It belongs to the SecB family. In terms of assembly, homotetramer, a dimer of dimers. One homotetramer interacts with 1 SecA dimer.

Its subcellular location is the cytoplasm. Its function is as follows. One of the proteins required for the normal export of preproteins out of the cell cytoplasm. It is a molecular chaperone that binds to a subset of precursor proteins, maintaining them in a translocation-competent state. It also specifically binds to its receptor SecA. This chain is Protein-export protein SecB, found in Acidovorax ebreus (strain TPSY) (Diaphorobacter sp. (strain TPSY)).